The sequence spans 1927 residues: Lactase/phlorizin hydrolase (1927 aa).

The N-terminal stretch at 1–19 is a signal peptide; that stretch reads MELSWHVVFIALLSFSCWG. A propeptide spans 20 to 868 (XBetaGly); that stretch reads SDWESDRNFI…NTVNLPSKVR (849 aa). At 20-1882 the chain is on the extracellular side; that stretch reads SDWESDRNFI…LMLGTTEAQT (1863 aa). Asparagine 42 carries N-linked (GlcNAc...) asparagine glycosylation. The glycosyl hydrolase-1 1; Region I stretch occupies residues 44–286; the sequence is SGLLGDQSSN…FIFNLKLPDC (243 aa). A glycosyl hydrolase-1 2; Region II region spans residues 362-855; sequence IWEAFANQSR…GFLTKGAKRL (494 aa). Asparagine 368, asparagine 418, asparagine 512, asparagine 821, asparagine 934, asparagine 946, and asparagine 989 each carry an N-linked (GlcNAc...) asparagine glycan. The glycosyl hydrolase-1 3; Region III. Phlorizin hydrolase/glycosylceramidase activity stretch occupies residues 902 to 1366; that stretch reads TFRDDFLWGV…EVITNNGMPL (465 aa). Residue glutamate 1065 is the Proton donor; for phlorizin hydrolase/Glycosylceramidase activity of the active site. An N-linked (GlcNAc...) asparagine glycan is attached at asparagine 1174. The interval 1220–1244 is disordered; that stretch reads RLNPPSYEDDQEMAEEEDPSWPSTA. Residues 1226 to 1238 show a composition bias toward acidic residues; that stretch reads YEDDQEMAEEEDP. The active-site Nucleophile; for phlorizin hydrolase/Glycosylceramidase activity is the glutamate 1273. N-linked (GlcNAc...) asparagine glycosylation is found at asparagine 1340 and asparagine 1508. Residues 1373–1846 form a glycosyl hydrolase-1 4; Region IV. Lactase activity region; that stretch reads LYGRFPEGFI…CNGFPDPATG (474 aa). The Proton donor; for lactase activity role is filled by glutamate 1538. The tract at residues 1647–1927 is required for homodimerization and transport to the plasma membrane; sequence RDRSLAAGLN…QQELSPVSSF (281 aa). 2 N-linked (GlcNAc...) asparagine glycosylation sites follow: asparagine 1656 and asparagine 1672. Residue glutamate 1749 is the Nucleophile; for lactase activity of the active site. 2 N-linked (GlcNAc...) asparagine glycosylation sites follow: asparagine 1761 and asparagine 1814. The chain crosses the membrane as a helical span at residues 1883-1901; the sequence is ALYVLFSLVLLGVCGLAFL. Topologically, residues 1902-1927 are cytoplasmic; the sequence is SYKYCKRSKQGKTQRSQQELSPVSSF.

Belongs to the glycosyl hydrolase 1 family. In terms of assembly, homodimer. Post-translationally, N-glycosylated. As to expression, specifically expressed in small intestine.

The protein localises to the apical cell membrane. The enzyme catalyses lactose + H2O = beta-D-galactose + D-glucose. The catalysed reaction is phlorizin + H2O = phloretin + beta-D-glucose. It catalyses the reaction D-cellobiose + H2O = beta-D-glucose + D-glucose. It carries out the reaction quercetin 4'-O-beta-D-glucoside + H2O = quercetin + beta-D-glucose. The enzyme catalyses quercetin 3-O-beta-D-glucoside + H2O = quercetin + beta-D-glucose. The catalysed reaction is kaempferol 3-O-beta-D-glucoside + H2O = kaempferol + beta-D-glucose. It catalyses the reaction luteolin 7-O-beta-D-glucoside + H2O = luteolin + beta-D-glucose. It carries out the reaction luteolin 4'-O-beta-D-glucoside + H2O = luteolin + beta-D-glucose. The enzyme catalyses (2S)-naringenin 7-O-beta-D-glucoside + H2O = (2S)-naringenin + beta-D-glucose. The catalysed reaction is eriodictyol-7-O-beta-D-glucoside + H2O = (S)-eriodictyol + beta-D-glucose. It catalyses the reaction apigenin 7-O-beta-D-glucoside + H2O = apigenin + beta-D-glucose. It carries out the reaction daidzein 7-O-beta-D-glucoside + H2O = daidzein + beta-D-glucose + H(+). The enzyme catalyses genistein 7-O-beta-D-glucoside + H2O = genistein + beta-D-glucose. The catalysed reaction is a beta-D-galactosyl-N-acylsphingosine + H2O = a ceramide + beta-D-galactose.. It catalyses the reaction beta-D-glucosyl-(1&lt;-&gt;1')-N-hexadecanoylsphing-4-enine + H2O = N-hexadecanoylsphing-4-enine + beta-D-glucose. It carries out the reaction beta-D-galactosyl-(1&lt;-&gt;1')-N-hexadecanoylsphing-4-enine + H2O = beta-D-galactose + N-hexadecanoylsphing-4-enine. The enzyme catalyses beta-D-galactosyl-(1&lt;-&gt;1')-N-hexadecanoylsphinganine + H2O = N-hexadecanoylsphinganine + beta-D-galactose. The catalysed reaction is beta-D-glucosyl-(1&lt;-&gt;1')-N-hexadecanoylsphinganine + H2O = N-hexadecanoylsphinganine + beta-D-glucose. Its function is as follows. Broad specificity glycosidase of the intestinal brush border membrane that hydrolyzes lactose, the main sugar in mammalian milk, to produce D-glucose and D-galactose. The mature protein is composed of two domains that catalyze the hydrolysis of beta-glucopyranosides and beta-galactopyranosides, with a preference for hydrophilic aglycones (in lactose and cellobiose) for one domain and hydrophobic aglycones (in phlorizin and glycosylceramides) for the other. This chain is Lactase/phlorizin hydrolase, found in Homo sapiens (Human).